Here is a 380-residue protein sequence, read N- to C-terminus: MAPNIRKSHPLLKMVNNSLIDLPTPSNISAWWNFGSLLAVCLVTQILTGLLLAMHYTADTTLAFSSVAHTCRNVQYGWLIRNLHANGASFFFICIFLHIGRGLYYGSYLYKETWNTGVILLLTLMATAFVGYVLPWGQMSFWGATVITNLFSAIPYIGQTLVEWAWGGFSVDNPTLTRFFALHFLLPFVIAGITIIHLTFLHESGSNNPLGISSNSDKIPFHPYYSIKDILGLTLMFIPFLTLALFSPNFLGDPENFTPANPLVTPPHIKPEWYFLFAYAILRSIPNKLGGVLALAASVLILLLIPFLHKSKQRTMTFRPLSQTLFWLLVANLLILTWIGSQPVEHPFIIIGQMASLSYFSILLILFPMIGTLENKILNY.

The next 4 helical transmembrane spans lie at 34-54, 78-99, 114-134, and 179-199; these read FGSL…LLAM, WLIR…FLHI, WNTG…GYVL, and FFAL…IHLT. Residues His84 and His98 each coordinate heme b. Heme b-binding residues include His183 and His197. Residue His202 participates in a ubiquinone binding. 4 helical membrane-spanning segments follow: residues 227–247, 289–309, 321–341, and 348–368; these read IKDI…ALFS, LGGV…PFLH, LSQT…WIGS, and FIII…ILFP.

The protein belongs to the cytochrome b family. The cytochrome bc1 complex contains 11 subunits: 3 respiratory subunits (MT-CYB, CYC1 and UQCRFS1), 2 core proteins (UQCRC1 and UQCRC2) and 6 low-molecular weight proteins (UQCRH/QCR6, UQCRB/QCR7, UQCRQ/QCR8, UQCR10/QCR9, UQCR11/QCR10 and a cleavage product of UQCRFS1). This cytochrome bc1 complex then forms a dimer. It depends on heme b as a cofactor.

The protein localises to the mitochondrion inner membrane. In terms of biological role, component of the ubiquinol-cytochrome c reductase complex (complex III or cytochrome b-c1 complex) that is part of the mitochondrial respiratory chain. The b-c1 complex mediates electron transfer from ubiquinol to cytochrome c. Contributes to the generation of a proton gradient across the mitochondrial membrane that is then used for ATP synthesis. This is Cytochrome b (MT-CYB) from Alectoris chukar (Chukar partridge).